The sequence spans 88 residues: Small ribosomal subunit protein uS15 (88 aa).

This sequence belongs to the universal ribosomal protein uS15 family. Part of the 30S ribosomal subunit. Forms a bridge to the 50S subunit in the 70S ribosome, contacting the 23S rRNA.

In terms of biological role, one of the primary rRNA binding proteins, it binds directly to 16S rRNA where it helps nucleate assembly of the platform of the 30S subunit by binding and bridging several RNA helices of the 16S rRNA. Its function is as follows. Forms an intersubunit bridge (bridge B4) with the 23S rRNA of the 50S subunit in the ribosome. The sequence is that of Small ribosomal subunit protein uS15 from Sorangium cellulosum (strain So ce56) (Polyangium cellulosum (strain So ce56)).